Here is a 436-residue protein sequence, read N- to C-terminus: Transcription termination factor Rho (436 aa).

Residues 65–140 (LVFVKGVLEI…IRMESVNGLP (76 aa)) enclose the Rho RNA-BD domain. Residues 185-190 (GKGQRG), 197-202 (KAGKTV), and arginine 228 contribute to the ATP site.

It belongs to the Rho family. As to quaternary structure, homohexamer. The homohexamer assembles into an open ring structure.

In terms of biological role, facilitates transcription termination by a mechanism that involves Rho binding to the nascent RNA, activation of Rho's RNA-dependent ATPase activity, and release of the mRNA from the DNA template. This is Transcription termination factor Rho from Aquifex aeolicus (strain VF5).